The primary structure comprises 235 residues: Thaumatin II (235 aa).

The signal sequence occupies residues 1–22 (MAATTCFFFLFPFLLLLTLSRA). Intrachain disulfides connect Cys31/Cys226, Cys78/Cys88, Cys93/Cys99, Cys143/Cys215, Cys148/Cys199, Cys156/Cys167, Cys171/Cys180, and Cys181/Cys186. Positions 230–235 (LELEDE) are cleaved as a propeptide — removed in mature form.

The protein belongs to the thaumatin family.

Its subcellular location is the cytoplasmic vesicle. Its function is as follows. Taste-modifying protein; intensely sweet-tasting. It is 100000 times sweeter than sucrose on a molar basis. The sequence is that of Thaumatin II from Thaumatococcus daniellii (Katemfe).